Consider the following 99-residue polypeptide: SAGA-associated factor 11 (99 aa).

Residues 71–92 (IHCENCGRDVSANRLAAHLQRC) form an SGF11-type zinc finger.

This sequence belongs to the SGF11 family. As to quaternary structure, component of the 1.8 MDa SAGA transcription coactivator-HAT complex. SAGA is built of 5 distinct domains with specialized functions. Within the SAGA complex, SUS1, SGF11, SGF73 and UBP8 form an additional subcomplex of SAGA called the DUB module (deubiquitination module). Interacts directly with SGF73, SUS1 and UBP8.

The protein resides in the nucleus. Its function is as follows. Functions as a component of the transcription regulatory histone acetylation (HAT) complex SAGA. At the promoters, SAGA is required for recruitment of the basal transcription machinery. It influences RNA polymerase II transcriptional activity through different activities such as TBP interaction and promoter selectivity, interaction with transcription activators, and chromatin modification through histone acetylation and deubiquitination. SAGA acetylates nucleosomal histone H3 to some extent (to form H3K9ac, H3K14ac, H3K18ac and H3K23ac). SAGA interacts with DNA via upstream activating sequences (UASs). Involved in transcriptional regulation of a subset of SAGA-regulated genes. Within the SAGA complex, participates in a subcomplex, that specifically deubiquitinates histones H2B. This is SAGA-associated factor 11 from Saccharomyces cerevisiae (strain RM11-1a) (Baker's yeast).